A 356-amino-acid polypeptide reads, in one-letter code: Peptide chain release factor 1 (356 aa).

Q233 bears the N5-methylglutamine mark.

Belongs to the prokaryotic/mitochondrial release factor family. In terms of processing, methylated by PrmC. Methylation increases the termination efficiency of RF1.

The protein resides in the cytoplasm. Functionally, peptide chain release factor 1 directs the termination of translation in response to the peptide chain termination codons UAG and UAA. This chain is Peptide chain release factor 1 (prfA), found in Bacillus subtilis (strain 168).